Here is a 443-residue protein sequence, read N- to C-terminus: MLPFASCLPGSLLLWAFLLLLLGAASPQDPEEPDSYTECTDGYEWDADSQHCRDVNECLTIPEACKGEMKCINHYGGYLCLPRSAAVISDLHGEGPPPPAAHAQQPNPCPQGYEPDEQESCVDVDECTQALHDCRPSQDCHNLPGSYQCTCPDGYRKIGPECVDIDECRYRYCQHRCVNLPGSFRCQCEPGFQLGPNNRSCVDVNECDMGAPCEQRCFNSYGTFLCRCNQGYELHRDGFSCSDIDECGYSSYLCQYRCVNEPGRFSCHCPQGYQLLATRLCQDIDECETGAHQCSEAQTCVNFHGGYRCVDTNRCVEPYVQVSDNRCLCPASNPLCREQPSSIVHRYMSITSERSVPADVFQIQATSVYPGAYNAFQIRSGNTQGDFYIRQINNVSAMLVLARPVTGPREYVLDLEMVTMNSLMSYRASSVLRLTVFVGAYTF.

Residues 1–27 (MLPFASCLPGSLLLWAFLLLLLGAASP) form the signal peptide. Residue glutamine 28 is modified to Pyrrolidone carboxylic acid. The 46-residue stretch at 36–81 (YTECTDGYEWDADSQHCRDVNECLTIPEACKGEMKCINHYGGYLCL) folds into the EGF-like 1; atypical domain. 18 disulfides stabilise this stretch: cysteine 58-cysteine 121, cysteine 65-cysteine 80, cysteine 71-cysteine 109, cysteine 127-cysteine 140, cysteine 134-cysteine 149, cysteine 151-cysteine 162, cysteine 168-cysteine 177, cysteine 173-cysteine 186, cysteine 188-cysteine 201, cysteine 207-cysteine 217, cysteine 213-cysteine 226, cysteine 228-cysteine 241, cysteine 247-cysteine 258, cysteine 254-cysteine 267, cysteine 269-cysteine 281, cysteine 287-cysteine 300, cysteine 294-cysteine 309, and cysteine 315-cysteine 327. Positions 91–117 (LHGEGPPPPAAHAQQPNPCPQGYEPDE) are disordered. One can recognise an EGF-like 2; calcium-binding domain in the interval 123–163 (DVDECTQALHDCRPSQDCHNLPGSYQCTCPDGYRKIGPECV). The 39-residue stretch at 164 to 202 (DIDECRYRYCQHRCVNLPGSFRCQCEPGFQLGPNNRSCV) folds into the EGF-like 3; calcium-binding domain. An N-linked (GlcNAc...) asparagine glycan is attached at asparagine 198. Residues 203 to 242 (DVNECDMGAPCEQRCFNSYGTFLCRCNQGYELHRDGFSCS) enclose the EGF-like 4; calcium-binding domain. The EGF-like 5; calcium-binding domain occupies 243–282 (DIDECGYSSYLCQYRCVNEPGRFSCHCPQGYQLLATRLCQ). The EGF-like 6; calcium-binding domain maps to 283–328 (DIDECETGAHQCSEAQTCVNFHGGYRCVDTNRCVEPYVQVSDNRCL). N-linked (GlcNAc...) asparagine glycosylation is present at asparagine 394.

Belongs to the fibulin family. Homodimer; disulfide-linked. Multimer; allows heparin binding. Monomer. Binds preferentially to p53 mutants. Interacts with FBN1 (via N-terminal domain); this interaction inhibits EFEMP2 binding to LOX and ELN. Interacts with ELN with moderate affinity; this interaction regulates ELN self-assembly maturation stage. Interacts with PCOLCE. Interacts with collagen type IV trimer (COL4A1-COL4A1-COL4A2), NID2 and moderately with COL15A1-derived endostatin. Interacts with EMILIN1; this interaction promotes the incorporation of EFEMP2 into the extracellular matrix. Interacts with LTBP4; the LTBP4 long form (LTBP4L) has a stronger binding affinity than the LTBP4 short form and the LTBP4 long form promotes fibrillar deposition of EFEMP2. Interacts with LOX (via propeptide); this interaction is strong and facilitates formation of ternary complexes with ELN during elastic fiber assembly; this interaction limits interaction of EFEMP2 with FBLN5. Interacts with PITX2. Interacts with FBLN5 with moderate affinity. Interacts with LOXL1 (via propeptide), LTBP1 and TGFB1 stronger than with LOXL2 and LTBP3. Post-translationally, N-glycosylated; contains mostly complex-type glycans. Not O-glycosylated. Cleaved by ELANE; produces a 50-55 kDa fragment. Cleaved by MMP2 and MMP9; produces several fragments. Expressed in elastic fibers of the skin, near the dermal-epidermal junction, surrounding the hair follicles and throughout the dermis. Expressed in tendon around tenocytes. Prominently expressed in cartilage, bone, perichondrium and ligaments. Also detected in bone marrow stroma. Expressed in aorta, lung, and esophagus.

It localises to the secreted. Its subcellular location is the extracellular space. It is found in the extracellular matrix. The protein resides in the basement membrane. In terms of biological role, plays a crucial role in elastic fiber formation in tissue, and in the formation of ultrastructural connections between elastic laminae and smooth muscle cells in the aorta, therefore participates in terminal differentiation and maturation of smooth muscle cell (SMC) and in the mechanical properties and wall integrity maintenance of the aorta. In addition, is involved in the control of collagen fibril assembly in tissue throught proteolytic activation of LOX leading to cross- linking of collagen and elastin. Also promotes ELN coacervation and participates in the deposition of ELN coacervates on to microfibrils but also regulates ELN cross- linking through LOX interaction. Moreover adheres to the cells through heparin binding in a calcium-dependent manner and regulates vascularlar smooth muscle cells proliferation through angiotensin signaling. This chain is EGF-containing fibulin-like extracellular matrix protein 2, found in Mus musculus (Mouse).